A 168-amino-acid polypeptide reads, in one-letter code: Lipoprotein signal peptidase (168 aa).

A run of 3 helical transmembrane segments spans residues 8–28 (TLLV…VVLL), 70–90 (KYFL…YLFF), and 104–124 (VLLC…GHIV). Active-site residues include Asp-125 and Asp-143. The chain crosses the membrane as a helical span at residues 134 to 154 (WAFPTFNVADVLISLGTLLLV).

It belongs to the peptidase A8 family.

The protein localises to the cell inner membrane. The catalysed reaction is Release of signal peptides from bacterial membrane prolipoproteins. Hydrolyzes -Xaa-Yaa-Zaa-|-(S,diacylglyceryl)Cys-, in which Xaa is hydrophobic (preferably Leu), and Yaa (Ala or Ser) and Zaa (Gly or Ala) have small, neutral side chains.. The protein operates within protein modification; lipoprotein biosynthesis (signal peptide cleavage). Its function is as follows. This protein specifically catalyzes the removal of signal peptides from prolipoproteins. The protein is Lipoprotein signal peptidase of Chlamydia pneumoniae (Chlamydophila pneumoniae).